A 289-amino-acid polypeptide reads, in one-letter code: Protease HtpX (289 aa).

2 helical membrane passes run 4–24 (IMLFLATNLAVVLVLSVVLNI) and 36–56 (LSGLLVMAAVFGFGGAFISLM). Residue H143 participates in Zn(2+) binding. E144 is a catalytic residue. A Zn(2+)-binding site is contributed by H147. 2 consecutive transmembrane segments (helical) span residues 158–178 (LMQGVVNTFVIFLSRFIANIV) and 192–212 (MVYFGVSMVLELVFGFLASFL). E221 contacts Zn(2+).

This sequence belongs to the peptidase M48B family. The cofactor is Zn(2+).

It localises to the cell inner membrane. This Vibrio campbellii (strain ATCC BAA-1116) protein is Protease HtpX.